The following is a 1040-amino-acid chain: Multidrug resistance protein MdtB (1040 aa).

The next 11 helical transmembrane spans lie at 15–37 (LFIL…GIIG), 345–362 (FELM…YLFL), 367–389 (ATII…MVFL), 396–418 (LTLM…VIEN), 438–460 (GEIG…PLLF), 472–494 (FAVT…TPMM), 535–557 (HPWL…WITI), 867–889 (VWLI…ESFI), 909–931 (LIIA…IGIV), 968–990 (ILMT…GVGA), and 1000–1022 (MVGG…YLLF).

The protein belongs to the resistance-nodulation-cell division (RND) (TC 2.A.6) family. MdtB subfamily. Part of a tripartite efflux system composed of MdtA, MdtB and MdtC. MdtB forms a heteromultimer with MdtC.

It localises to the cell inner membrane. This chain is Multidrug resistance protein MdtB, found in Salmonella typhi.